Reading from the N-terminus, the 439-residue chain is Serine hydroxymethyltransferase (439 aa).

(6S)-5,6,7,8-tetrahydrofolate-binding positions include Leu-119 and 123–125 (GHL). Residue Lys-228 is modified to N6-(pyridoxal phosphate)lysine. 370-372 (SPF) contributes to the (6S)-5,6,7,8-tetrahydrofolate binding site.

This sequence belongs to the SHMT family. As to quaternary structure, homodimer. Pyridoxal 5'-phosphate is required as a cofactor.

Its subcellular location is the cytoplasm. It carries out the reaction (6R)-5,10-methylene-5,6,7,8-tetrahydrofolate + glycine + H2O = (6S)-5,6,7,8-tetrahydrofolate + L-serine. It participates in one-carbon metabolism; tetrahydrofolate interconversion. The protein operates within amino-acid biosynthesis; glycine biosynthesis; glycine from L-serine: step 1/1. Functionally, catalyzes the reversible interconversion of serine and glycine with tetrahydrofolate (THF) serving as the one-carbon carrier. This reaction serves as the major source of one-carbon groups required for the biosynthesis of purines, thymidylate, methionine, and other important biomolecules. Also exhibits THF-independent aldolase activity toward beta-hydroxyamino acids, producing glycine and aldehydes, via a retro-aldol mechanism. The chain is Serine hydroxymethyltransferase from Chlorobium phaeobacteroides (strain BS1).